A 409-amino-acid chain; its full sequence is 3-dehydro-bile acid delta(4,6)-reductase (409 aa).

FAD contacts are provided by Ser12, Glu33, Val131, Glu378, Asn390, and Leu391.

It belongs to the BaiN/RdsA family. BaiN subfamily. FAD is required as a cofactor.

The catalysed reaction is 3-oxocholan-24-oyl-CoA + NAD(+) = 3-oxochol-4-en-24-oyl-CoA + NADH + H(+). It catalyses the reaction 3-oxochol-4-en-24-oyl-CoA + NAD(+) = 3-oxochol-4,6-dien-24-oyl-CoA + NADH + H(+). It carries out the reaction 12alpha-hydroxy-3-oxocholan-24-oyl-CoA + NAD(+) = 12alpha-hydroxy-3-oxochol-4-en-24-oyl-CoA + NADH + H(+). The enzyme catalyses 12alpha-hydroxy-3-oxochol-4-en-24-oyl-CoA + NAD(+) = 12alpha-hydroxy-3-oxochola-4,6-dien-24-oyl-CoA + NADH + H(+). The protein operates within lipid metabolism; bile acid degradation. In terms of biological role, involved in the secondary bile acid metabolism. Catalyzes two subsequent reductions of the double bonds within the bile acid A/B rings of 3-oxochol-4,6-dien-24-oyl-CoA and 12alpha-hydroxy-3-oxochol-4,6-dien-24-oyl-CoA to yield 3-oxocholan-24-oyl-CoA and 12alpha-hydroxy-3-oxocholan-24-oyl-CoA, respectively. This chain is 3-dehydro-bile acid delta(4,6)-reductase, found in Clostridium scindens (strain ATCC 35704 / DSM 5676 / VPI 13733 / 19).